Here is a 448-residue protein sequence, read N- to C-terminus: Tubulin beta-1 chain (448 aa).

Glutamine 11, glutamate 69, serine 138, glycine 142, threonine 143, glycine 144, asparagine 204, and asparagine 226 together coordinate GTP. Glutamate 69 lines the Mg(2+) pocket. Residues 428–448 are disordered; that stretch reads AGIGDDEEEDEEGVMGEEIDA. Residues 430–448 are compositionally biased toward acidic residues; that stretch reads IGDDEEEDEEGVMGEEIDA.

Belongs to the tubulin family. In terms of assembly, dimer of alpha and beta chains. A typical microtubule is a hollow water-filled tube with an outer diameter of 25 nm and an inner diameter of 15 nM. Alpha-beta heterodimers associate head-to-tail to form protofilaments running lengthwise along the microtubule wall with the beta-tubulin subunit facing the microtubule plus end conferring a structural polarity. Microtubules usually have 13 protofilaments but different protofilament numbers can be found in some organisms and specialized cells. Mg(2+) is required as a cofactor.

It localises to the cytoplasm. It is found in the cytoskeleton. Tubulin is the major constituent of microtubules, a cylinder consisting of laterally associated linear protofilaments composed of alpha- and beta-tubulin heterodimers. Microtubules grow by the addition of GTP-tubulin dimers to the microtubule end, where a stabilizing cap forms. Below the cap, tubulin dimers are in GDP-bound state, owing to GTPase activity of alpha-tubulin. This is Tubulin beta-1 chain (TUB-1) from Echinococcus multilocularis (Fox tapeworm).